Consider the following 410-residue polypeptide: Histidine--tRNA ligase (410 aa).

Belongs to the class-II aminoacyl-tRNA synthetase family. In terms of assembly, homodimer.

It is found in the cytoplasm. It carries out the reaction tRNA(His) + L-histidine + ATP = L-histidyl-tRNA(His) + AMP + diphosphate + H(+). This chain is Histidine--tRNA ligase, found in Campylobacter hominis (strain ATCC BAA-381 / DSM 21671 / CCUG 45161 / LMG 19568 / NCTC 13146 / CH001A).